A 287-amino-acid chain; its full sequence is Elongation factor Ts (287 aa).

The tract at residues 80–83 (TDFL) is involved in Mg(2+) ion dislocation from EF-Tu.

This sequence belongs to the EF-Ts family.

The protein resides in the cytoplasm. Its function is as follows. Associates with the EF-Tu.GDP complex and induces the exchange of GDP to GTP. It remains bound to the aminoacyl-tRNA.EF-Tu.GTP complex up to the GTP hydrolysis stage on the ribosome. The protein is Elongation factor Ts of Pseudomonas syringae pv. syringae (strain B728a).